The sequence spans 53 residues: Mitochondrial sheath formation-associated protein (53 aa).

Mitochondrial intermembrane loops occupy residues 1–6 and 1–7; these read MIVLGW and MIVLGWM. The next 2 helical transmembrane spans lie at 7–23 and 8–24; these read MLFVGLATYMGTFPEAM and LFVGLATYMGTFPEAMP. Cytoplasmic segments lie at residues 24–53 and 25–40; these read PPTLKWKERLPGQENKARRRIQALEEELLL and PTLKWKERLPGQENKA.

In terms of assembly, interacts with VDAC3. Testis specific. Detected only in germ cells at the step of spermiogenesis (at protein level). Expressed during the middle steps of spermatid development. As to expression, testis specific. Detected only in germ cells at the step of spermiogenesis (at protein level). Expressed in the late steps of spermatid development.

The protein localises to the mitochondrion outer membrane. In terms of biological role, regulates sperm development. May be involved in mitochondrial sheath formation. This Mus musculus (Mouse) protein is Mitochondrial sheath formation-associated protein.